Here is a 379-residue protein sequence, read N- to C-terminus: Homeobox protein SBH1 (379 aa).

Residues 75 to 125 (NNHNNNKTDDDDNNNNTGLGYYFMESDHHHHHHGNNNNNGSSSSSSSSAVK) form a disordered region. Residues 109–122 (NNNNNGSSSSSSSS) show a composition bias toward low complexity. In terms of domain architecture, ELK spans 261-281 (DLKGQLLRKYSGYLGSLKQEF). Positions 282–345 (MKKRKKGKLP…NQRKRHWKPS (64 aa)) form a DNA-binding region, homeobox; TALE-type.

The protein belongs to the TALE/KNOX homeobox family. Expressed mainly in embryonic tissues. Weakly detected in stems and hypocotyl.

Its subcellular location is the nucleus. In terms of biological role, possible transcription activator involved in early embryonic development. Probably binds to the DNA sequence 5'-TGAC-3'. The chain is Homeobox protein SBH1 (H1) from Glycine max (Soybean).